Consider the following 865-residue polypeptide: V-type proton ATPase 116 kDa subunit a 3 (865 aa).

The Cytoplasmic segment spans residues 1–409 (MGSIYRSEHM…VNPAPWTIIS (409 aa)). Residues 51-121 (FVNEVRRCDE…NKNCKVLKNN (71 aa)) adopt a coiled-coil conformation. The helical transmembrane segment at 410–430 (FPFLFAVMFGDAGHGIIMLIA) threads the bilayer. At 431–453 (ASAFVIFEKKLISMKIKDEIFNT) the chain is on the extracellular side. A helical transmembrane segment spans residues 454–474 (FFGGRYVVLLMGMFAIYTGFI). Over 475 to 556 (YNDFYSKSVN…FLNPMKMKTS (82 aa)) the chain is Cytoplasmic. Residues 557-577 (ILLGISQMAFGIMLSLMNHIG) traverse the membrane as a helical segment. N578 carries N-linked (GlcNAc...) asparagine glycosylation. The Extracellular segment spans residues 578 to 583 (NRSVVD). The helical transmembrane segment at 584 to 604 (IVFVFIPQCLFLGCIFVYLCL) threads the bilayer. Topologically, residues 605-623 (QVLMKWIFFYVKPAYIFGR) are cytoplasmic. Residues 624-644 (LYPGSNCAPSLLIGLINMFMV) form a helical membrane-spanning segment. Over 645 to 688 (KSRDASFAHDVGTAAGKEWVIVNGQNVTYTINDQCYLQQWYPNQ) the chain is Extracellular. N-linked (GlcNAc...) asparagine glycans are attached at residues N670 and N687. The helical transmembrane segment at 689-709 (SLVELILLLIAVVSVPVMLLV) threads the bilayer. The Cytoplasmic portion of the chain corresponds to 710-798 (KPFYIRWRHS…LTMGGWGGSA (89 aa)). Residues 799 to 819 (AITILFYFIFSILSVCILILM) traverse the membrane as a helical segment. Topologically, residues 820–865 (EGLSAFLHAIRLHWVEFQSKFYGGTGIQFEPFCFTKIIRVYEGLDQ) are extracellular.

Belongs to the V-ATPase 116 kDa subunit family. In terms of assembly, V-ATPase is a heteromultimeric enzyme made up of two complexes: the ATP-hydrolytic V1 complex and the proton translocation V0 complex. The V1 complex consists of three catalytic AB heterodimers that form a heterohexamer, three peripheral stalks each consisting of EG heterodimers, one central rotor including subunits D and F, and the regulatory subunits C and H. The proton translocation complex V0 consists of the proton transport subunit a, a ring of proteolipid subunits c9c'', rotary subunit d, subunits e and f, and the accessory subunits vah-19/Ac45 and vah-20/PRR. Interacts with V-type proton ATPase subunit C vha-11.

The protein localises to the apical cell membrane. In terms of biological role, subunit of the V0 complex of vacuolar(H+)-ATPase (V-ATPase), a multisubunit enzyme composed of a peripheral complex (V1) that hydrolyzes ATP and a membrane integral complex (V0) that translocates protons. V-ATPase is responsible for acidifying and maintaining the pH of intracellular compartments and in some cell types, is targeted to the plasma membrane, where it is responsible for acidifying the extracellular environment. In the intestine, required for the rhythmic defecation behavior by promoting acidification in the gut lumen following defecation. Also, luminal acidification is required for nutrient uptake. The protein is V-type proton ATPase 116 kDa subunit a 3 of Caenorhabditis elegans.